The sequence spans 93 residues: Exodeoxyribonuclease 7 small subunit (93 aa).

The segment covering 61–75 has biased composition (basic and acidic residues); sequence IDDNGDEKVYEKQTD. The interval 61–93 is disordered; that stretch reads IDDNGDEKVYEKQTDDPSNNGGGNRGFGSADEQ.

Belongs to the XseB family. In terms of assembly, heterooligomer composed of large and small subunits.

The protein resides in the cytoplasm. It catalyses the reaction Exonucleolytic cleavage in either 5'- to 3'- or 3'- to 5'-direction to yield nucleoside 5'-phosphates.. Bidirectionally degrades single-stranded DNA into large acid-insoluble oligonucleotides, which are then degraded further into small acid-soluble oligonucleotides. This is Exodeoxyribonuclease 7 small subunit from Limosilactobacillus reuteri (strain DSM 20016) (Lactobacillus reuteri).